The primary structure comprises 533 residues: Tryptophan N-monooxygenase CYP79A68 (533 aa).

A helical membrane pass occupies residues 12–32 (VTPPISLSLAFIIFMFLVKFI). Asn209 is a glycosylation site (N-linked (GlcNAc...) asparagine). Cys471 lines the heme pocket.

This sequence belongs to the cytochrome P450 family. The cofactor is heme. Confined to buds.

It localises to the membrane. It carries out the reaction L-tryptophan + 2 reduced [NADPH--hemoprotein reductase] + 2 O2 = (E)-(indol-3-yl)acetaldehyde oxime + 2 oxidized [NADPH--hemoprotein reductase] + CO2 + 3 H2O + 2 H(+). Catalyzes with low efficiency E and Z isomers of indole-3-acetaldoxime from tryptophan (Trp). The protein is Tryptophan N-monooxygenase CYP79A68 of Prunus mume (Japanese apricot).